A 244-amino-acid polypeptide reads, in one-letter code: CTD nuclear envelope phosphatase 1 (244 aa).

The chain crosses the membrane as a helical span at residues 7-29 (LLGLRTFVAFAAKLWSFFIYLLR). The FCP1 homology domain maps to 57–224 (AQVKRKILVL…LNLLPMLDAL (168 aa)).

This sequence belongs to the dullard family. In terms of assembly, interacts with CNEP1R1; the complex dephosphorylates LPIN1 and LPIN2. Muscle specific with lower expression in other metabolic tissues.

It localises to the endoplasmic reticulum membrane. It is found in the nucleus membrane. It catalyses the reaction O-phospho-L-seryl-[protein] + H2O = L-seryl-[protein] + phosphate. It carries out the reaction O-phospho-L-threonyl-[protein] + H2O = L-threonyl-[protein] + phosphate. Serine/threonine protein phosphatase forming with CNEP1R1 an active phosphatase complex that dephosphorylates and may activate LPIN1 and LPIN2. LPIN1 and LPIN2 are phosphatidate phosphatases that catalyze the conversion of phosphatidic acid to diacylglycerol and control the metabolism of fatty acids at different levels. May indirectly modulate the lipid composition of nuclear and/or endoplasmic reticulum membranes and be required for proper nuclear membrane morphology and/or dynamics. May also indirectly regulate the production of lipid droplets and triacylglycerol. May antagonize BMP signaling. The chain is CTD nuclear envelope phosphatase 1 (Ctdnep1) from Mus musculus (Mouse).